The primary structure comprises 95 residues: Signal recognition particle 19 kDa protein (95 aa).

The protein belongs to the SRP19 family. Part of the signal recognition particle protein translocation system, which is composed of SRP and FtsY. Archaeal SRP consists of a 7S RNA molecule of 300 nucleotides and two protein subunits: SRP54 and SRP19.

It localises to the cytoplasm. In terms of biological role, involved in targeting and insertion of nascent membrane proteins into the cytoplasmic membrane. Binds directly to 7S RNA and mediates binding of the 54 kDa subunit of the SRP. The chain is Signal recognition particle 19 kDa protein from Pyrobaculum islandicum (strain DSM 4184 / JCM 9189 / GEO3).